A 435-amino-acid chain; its full sequence is Phosphomethylpyrimidine synthase (435 aa).

Residues Asn-67, Met-96, Tyr-125, His-163, 185 to 187 (SRG), 226 to 229 (DGLR), and Glu-265 each bind substrate. His-269 serves as a coordination point for Zn(2+). Tyr-292 serves as a coordination point for substrate. Residue His-333 coordinates Zn(2+). Residues Cys-408, Cys-411, and Cys-415 each coordinate [4Fe-4S] cluster.

Belongs to the ThiC family. Requires [4Fe-4S] cluster as cofactor.

It carries out the reaction 5-amino-1-(5-phospho-beta-D-ribosyl)imidazole + S-adenosyl-L-methionine = 4-amino-2-methyl-5-(phosphooxymethyl)pyrimidine + CO + 5'-deoxyadenosine + formate + L-methionine + 3 H(+). Its pathway is cofactor biosynthesis; thiamine diphosphate biosynthesis. Catalyzes the synthesis of the hydroxymethylpyrimidine phosphate (HMP-P) moiety of thiamine from aminoimidazole ribotide (AIR) in a radical S-adenosyl-L-methionine (SAM)-dependent reaction. In Thermus thermophilus (strain ATCC BAA-163 / DSM 7039 / HB27), this protein is Phosphomethylpyrimidine synthase.